The following is a 288-amino-acid chain: MHLADFLAGSVGGAFGVAVGYPLDTVKVRLQTQTGYSGFWQCVRKTCRNEGLQGFYRGMSMPISTVSISSSLVFGTYRNILQFLHQLQHRSAGEPHHKAHIFLAGFTGGVTQVLVMAPADIVKVRLQCQTEPVQHISQESSSKYRGPVQCLLRIARDEGLLGLYKGSAALALRDGPSFATYFLTYNTICEILTTENQRPGWPVVLLAGGVSGMCGWAVGTPMDVIKSRLQVDGVSGRRYRGFLHCITHSVRTEGSGVLFRGLTVNCIRAFPVNMSVFAMYEAVVRLLR.

Solcar repeat units lie at residues 1 to 83, 99 to 191, and 199 to 286; these read MHLA…ILQF, AHIF…ICEI, and PGWP…VVRL. 6 helical membrane-spanning segments follow: residues 3–23, 58–75, 101–121, 175–195, 199–219, and 257–277; these read LADF…GYPL, GMSM…LVFG, IFLA…PADI, GPSF…LTTE, PGWP…WAVG, and VLFR…MSVF.

Belongs to the mitochondrial carrier (TC 2.A.29) family.

It localises to the mitochondrion inner membrane. The chain is Solute carrier family 25 member 47-B (slc25a47b) from Danio rerio (Zebrafish).